A 581-amino-acid polypeptide reads, in one-letter code: Arginine--tRNA ligase (581 aa).

The 'HIGH' region motif lies at 126–136; that stretch reads PNLAKEMHVGH.

The protein belongs to the class-I aminoacyl-tRNA synthetase family. In terms of assembly, monomer.

It is found in the cytoplasm. The catalysed reaction is tRNA(Arg) + L-arginine + ATP = L-arginyl-tRNA(Arg) + AMP + diphosphate. This Shewanella sp. (strain MR-7) protein is Arginine--tRNA ligase.